The chain runs to 862 residues: Protein translocase subunit SecA (862 aa).

ATP contacts are provided by residues Gln88, 106–110 (GEGKT), and Asp506. Residues Cys839, Cys841, Cys850, and His851 each coordinate Zn(2+).

Belongs to the SecA family. Monomer and homodimer. Part of the essential Sec protein translocation apparatus which comprises SecA, SecYEG and auxiliary proteins SecDF-YajC and YidC. It depends on Zn(2+) as a cofactor.

The protein resides in the cell inner membrane. The protein localises to the cytoplasm. It catalyses the reaction ATP + H2O + cellular proteinSide 1 = ADP + phosphate + cellular proteinSide 2.. In terms of biological role, part of the Sec protein translocase complex. Interacts with the SecYEG preprotein conducting channel. Has a central role in coupling the hydrolysis of ATP to the transfer of proteins into and across the cell membrane, serving as an ATP-driven molecular motor driving the stepwise translocation of polypeptide chains across the membrane. This is Protein translocase subunit SecA from Campylobacter jejuni (strain RM1221).